Reading from the N-terminus, the 292-residue chain is NAD kinase (292 aa).

D72 acts as the Proton acceptor in catalysis. Residues 72 to 73 (DG), 146 to 147 (NE), H157, R174, D176, and 187 to 192 (TAYSLS) contribute to the NAD(+) site.

This sequence belongs to the NAD kinase family. A divalent metal cation serves as cofactor.

It is found in the cytoplasm. It carries out the reaction NAD(+) + ATP = ADP + NADP(+) + H(+). In terms of biological role, involved in the regulation of the intracellular balance of NAD and NADP, and is a key enzyme in the biosynthesis of NADP. Catalyzes specifically the phosphorylation on 2'-hydroxyl of the adenosine moiety of NAD to yield NADP. The polypeptide is NAD kinase (Shewanella loihica (strain ATCC BAA-1088 / PV-4)).